We begin with the raw amino-acid sequence, 332 residues long: 5-dehydro-2-deoxygluconokinase 1 (332 aa).

This sequence belongs to the carbohydrate kinase PfkB family.

It catalyses the reaction 5-dehydro-2-deoxy-D-gluconate + ATP = 6-phospho-5-dehydro-2-deoxy-D-gluconate + ADP + H(+). Its pathway is polyol metabolism; myo-inositol degradation into acetyl-CoA; acetyl-CoA from myo-inositol: step 5/7. Its function is as follows. Catalyzes the phosphorylation of 5-dehydro-2-deoxy-D-gluconate (2-deoxy-5-keto-D-gluconate or DKG) to 6-phospho-5-dehydro-2-deoxy-D-gluconate (DKGP). The chain is 5-dehydro-2-deoxygluconokinase 1 from Bacillus cereus (strain ZK / E33L).